A 225-amino-acid chain; its full sequence is Pathogenesis-related thaumatin-like protein 3.8 (225 aa).

The signal sequence occupies residues 1–26 (MAKVSDLALLLVAGMAISLYIQETGA). 8 cysteine pairs are disulfide-bonded: cysteine 35-cysteine 224, cysteine 76-cysteine 86, cysteine 91-cysteine 97, cysteine 139-cysteine 213, cysteine 144-cysteine 197, cysteine 152-cysteine 162, cysteine 166-cysteine 175, and cysteine 176-cysteine 184. Residue asparagine 188 is glycosylated (N-linked (GlcNAc...) asparagine).

Belongs to the thaumatin family.

Functionally, may be involved in disease resistance. The chain is Pathogenesis-related thaumatin-like protein 3.8 from Cryptomeria japonica (Japanese cedar).